Consider the following 361-residue polypeptide: Chorismate synthase (361 aa).

Positions 48 and 54 each coordinate NADP(+). Residues 125-127, 238-239, Gly-278, 293-297, and Arg-319 each bind FMN; these read RSS, NA, and KPTSS.

It belongs to the chorismate synthase family. Homotetramer. Requires FMNH2 as cofactor.

It carries out the reaction 5-O-(1-carboxyvinyl)-3-phosphoshikimate = chorismate + phosphate. The protein operates within metabolic intermediate biosynthesis; chorismate biosynthesis; chorismate from D-erythrose 4-phosphate and phosphoenolpyruvate: step 7/7. Functionally, catalyzes the anti-1,4-elimination of the C-3 phosphate and the C-6 proR hydrogen from 5-enolpyruvylshikimate-3-phosphate (EPSP) to yield chorismate, which is the branch point compound that serves as the starting substrate for the three terminal pathways of aromatic amino acid biosynthesis. This reaction introduces a second double bond into the aromatic ring system. The polypeptide is Chorismate synthase (Photorhabdus laumondii subsp. laumondii (strain DSM 15139 / CIP 105565 / TT01) (Photorhabdus luminescens subsp. laumondii)).